The following is a 697-amino-acid chain: uncharacterized protein (697 aa).

Transmembrane regions (helical) follow at residues 65 to 85, 106 to 126, 131 to 151, 163 to 183, 194 to 214, 227 to 247, 286 to 306, 316 to 336, 361 to 381, 394 to 414, 419 to 439, 450 to 470, 487 to 507, and 558 to 578; these read PVRNFIEEGCDGVTDLYVGIY, CTFRTNNVKLGYLIVDELHNF, YRQSQFGGITNLDFDAFEKAI, DAALQRIGLTGLAKKSMDINE, LSSYPTRMFNLIKEKSKVPLG, TSATTTASINVRTSATTTASI, STNATTTESTNASAKEDANKD, PVTDINKEPYKRKGSQMVLLE, SDEIKHLFLYGIDIYFCPEGV, MFELCVCWAGQKVSYRRMAWE, ERMLRNDEEYKEYLEDIEPYH, SVKRREIYSQIQRNYAWYLAI, QGSQVFRMSGRQIKELYYKVW, and TSAGLQGPQYVKLQFSRHHRQ. Residues 246–321 form a disordered region; sequence SINVRTSATT…NRFHPVTDIN (76 aa). The segment covering 251-298 has biased composition (low complexity); sequence TSATTTESTNSNTNATTTESTNSSTNATTTASTNSSTNATTTESTNAS. Residues 299-321 show a composition bias toward basic and acidic residues; that stretch reads AKEDANKDGNAEDNRFHPVTDIN.

The protein localises to the membrane. This is an uncharacterized protein from Saccharomyces cerevisiae (strain ATCC 204508 / S288c) (Baker's yeast).